Consider the following 175-residue polypeptide: Sec-independent protein translocase protein TatB (175 aa).

Residues 1 to 21 traverse the membrane as a helical segment; that stretch reads MLDLGLSKMALIGVVALVVLG. Residues 94-115 are compositionally biased toward low complexity; the sequence is SAVSPGGSAAADAPDGPSAASG. 2 disordered regions span residues 94-118 and 153-175; these read SAVS…GEPS and VQSG…ARFL. A compositionally biased stretch (basic residues) spans 160 to 175; the sequence is VARHRPASLRRPARFL.

Belongs to the TatB family. In terms of assembly, the Tat system comprises two distinct complexes: a TatABC complex, containing multiple copies of TatA, TatB and TatC subunits, and a separate TatA complex, containing only TatA subunits. Substrates initially bind to the TatABC complex, which probably triggers association of the separate TatA complex to form the active translocon.

Its subcellular location is the cell inner membrane. Functionally, part of the twin-arginine translocation (Tat) system that transports large folded proteins containing a characteristic twin-arginine motif in their signal peptide across membranes. Together with TatC, TatB is part of a receptor directly interacting with Tat signal peptides. TatB may form an oligomeric binding site that transiently accommodates folded Tat precursor proteins before their translocation. The chain is Sec-independent protein translocase protein TatB from Burkholderia pseudomallei (strain 1106a).